Reading from the N-terminus, the 139-residue chain is Sec-independent protein translocase protein TatB (139 aa).

Residues 1–21 (MFDMGFLELMLIGVVALLVLG) form a helical membrane-spanning segment. Residues 66–86 (QQRKLDAGLGKVRDEVERHGD) are compositionally biased toward basic and acidic residues. The segment at 66–139 (QQRKLDAGLG…APSAKDSNAP (74 aa)) is disordered.

The protein belongs to the TatB family. The Tat system comprises two distinct complexes: a TatABC complex, containing multiple copies of TatA, TatB and TatC subunits, and a separate TatA complex, containing only TatA subunits. Substrates initially bind to the TatABC complex, which probably triggers association of the separate TatA complex to form the active translocon.

Its subcellular location is the cell inner membrane. Its function is as follows. Part of the twin-arginine translocation (Tat) system that transports large folded proteins containing a characteristic twin-arginine motif in their signal peptide across membranes. Together with TatC, TatB is part of a receptor directly interacting with Tat signal peptides. TatB may form an oligomeric binding site that transiently accommodates folded Tat precursor proteins before their translocation. This Chromohalobacter salexigens (strain ATCC BAA-138 / DSM 3043 / CIP 106854 / NCIMB 13768 / 1H11) protein is Sec-independent protein translocase protein TatB.